We begin with the raw amino-acid sequence, 478 residues long: Glycogen synthase (478 aa).

Residue Lys-16 coordinates ADP-alpha-D-glucose.

This sequence belongs to the glycosyltransferase 1 family. Bacterial/plant glycogen synthase subfamily.

The catalysed reaction is [(1-&gt;4)-alpha-D-glucosyl](n) + ADP-alpha-D-glucose = [(1-&gt;4)-alpha-D-glucosyl](n+1) + ADP + H(+). The protein operates within glycan biosynthesis; glycogen biosynthesis. Synthesizes alpha-1,4-glucan chains using ADP-glucose. The chain is Glycogen synthase from Lachnoclostridium phytofermentans (strain ATCC 700394 / DSM 18823 / ISDg) (Clostridium phytofermentans).